A 238-amino-acid polypeptide reads, in one-letter code: 3-dehydroquinate dehydratase (238 aa).

3-dehydroquinate-binding positions include 35 to 37 and Arg-70; that span reads ELR. His-133 acts as the Proton donor/acceptor in catalysis. Residue Lys-160 is the Schiff-base intermediate with substrate of the active site. Arg-202 and Gln-225 together coordinate 3-dehydroquinate.

This sequence belongs to the type-I 3-dehydroquinase family. Homodimer.

It carries out the reaction 3-dehydroquinate = 3-dehydroshikimate + H2O. It participates in metabolic intermediate biosynthesis; chorismate biosynthesis; chorismate from D-erythrose 4-phosphate and phosphoenolpyruvate: step 3/7. In terms of biological role, involved in the third step of the chorismate pathway, which leads to the biosynthesis of aromatic amino acids. Catalyzes the cis-dehydration of 3-dehydroquinate (DHQ) and introduces the first double bond of the aromatic ring to yield 3-dehydroshikimate. The polypeptide is 3-dehydroquinate dehydratase (Staphylococcus aureus (strain USA300)).